A 306-amino-acid polypeptide reads, in one-letter code: Pantothenate kinase (306 aa).

ATP is bound at residue 90–97 (GSVAVGKS).

Belongs to the prokaryotic pantothenate kinase family.

The protein localises to the cytoplasm. The catalysed reaction is (R)-pantothenate + ATP = (R)-4'-phosphopantothenate + ADP + H(+). Its pathway is cofactor biosynthesis; coenzyme A biosynthesis; CoA from (R)-pantothenate: step 1/5. In Ligilactobacillus salivarius (strain UCC118) (Lactobacillus salivarius), this protein is Pantothenate kinase.